A 426-amino-acid chain; its full sequence is Putative zinc protease AlbF (426 aa).

H66 contacts Zn(2+). E69 functions as the Proton acceptor in the catalytic mechanism. 2 residues coordinate Zn(2+): H70 and E142.

The protein belongs to the peptidase M16 family. Requires Zn(2+) as cofactor.

Its function is as follows. Required for production of the bacteriocin subtilosin. Could catalyze some step in the processing of presubtilosin. This is Putative zinc protease AlbF (albF) from Bacillus subtilis (strain 168).